The primary structure comprises 213 residues: Protein-L-isoaspartate O-methyltransferase (213 aa).

The active site involves Ser-61.

The protein belongs to the methyltransferase superfamily. L-isoaspartyl/D-aspartyl protein methyltransferase family.

The protein resides in the cytoplasm. The catalysed reaction is [protein]-L-isoaspartate + S-adenosyl-L-methionine = [protein]-L-isoaspartate alpha-methyl ester + S-adenosyl-L-homocysteine. Functionally, catalyzes the methyl esterification of L-isoaspartyl residues in peptides and proteins that result from spontaneous decomposition of normal L-aspartyl and L-asparaginyl residues. It plays a role in the repair and/or degradation of damaged proteins. This chain is Protein-L-isoaspartate O-methyltransferase, found in Petrotoga mobilis (strain DSM 10674 / SJ95).